A 180-amino-acid polypeptide reads, in one-letter code: Superoxide dismutase [Cu-Zn] (180 aa).

The signal sequence occupies residues 1 to 19 (MFMNLLTQVSNAIFPQVEA). The Cu cation site is built by H68, H70, and H85. A disulfide bridge connects residues C79 and C171. Residues H85, H93, H102, and D105 each contribute to the Zn(2+) site. H142 provides a ligand contact to Cu cation.

This sequence belongs to the Cu-Zn superoxide dismutase family. In terms of assembly, homodimer. It depends on Cu cation as a cofactor. Zn(2+) serves as cofactor.

Its subcellular location is the cytoplasm. It carries out the reaction 2 superoxide + 2 H(+) = H2O2 + O2. Its activity is regulated as follows. The insertion of copper which activates the protein requires glutathione. This is independent of copper chaperone for SOD1 (CCS), which activates orthologs. Its function is as follows. Protects cells against oxidative stress by converting superoxide radicals to hydrogen peroxide. Required for normal brood size. May be involved in regulating mpk-1 phosphorylation downstream of phosphatase ptp-2 during oocyte maturation. The sequence is that of Superoxide dismutase [Cu-Zn] (sod-1) from Caenorhabditis elegans.